We begin with the raw amino-acid sequence, 417 residues long: MPLYEGLGSGGEKTAVVIDLGEAFTKCGFAGETGPRCIIPSVIKKAGMPKPIKVVQYNINTEELYSYLKEFIHILYFRHLLVNPRDRRVVVIESVLCPSHFRETLTRVLFKYFEVPSVLLAPSHLMALLTLGINSAMVLDCGYRESLVLPIYEGIPVLNCWGALPLGGKALHKELETQLLEQCTVDTGAAKEQSLPSVMGSIPEGVLEDIKVRTCFVSDLTRGLKIQAAKFNIDGNTERPSPPPNVDYPLDGEKILHVLGSIRDSVVEILFEQDNEEKSVATLILDSLMQCPIDTRKQLAENLVIIGGTSMLPGFLHRLLAEIRYLVEKPKYKKTLGTKTFRIHTPPAKANCVAWLGGAIFGALQDILGSRSVSKEYYNQTGRIPDWCSLNNPPLEMVFDVGKSQPPLMKRAFSTEK.

The protein belongs to the actin family. As to quaternary structure, subunit of dynactin, a multiprotein complex part of a tripartite complex with dynein and a adapter, such as BICDL1, BICD2 or HOOK3. The dynactin complex is built around ACTR1A/ACTB filament and consists of an actin-related filament composed of a shoulder domain, a pointed end and a barbed end. Its length is defined by its flexible shoulder domain. The soulder is composed of 2 DCTN1 subunits, 4 DCTN2 and 2 DCTN3. The 4 DCNT2 (via N-terminus) bind the ACTR1A filament and act as molecular rulers to determine the length. The pointed end is important for binding dynein-dynactin cargo adapters. Consists of 4 subunits: ACTR10, DCNT4, DCTN5 and DCTN6. The barbed end is composed of a CAPZA1:CAPZB heterodimers, which binds ACTR1A/ACTB filament and dynactin and stabilizes dynactin.

It is found in the cytoplasm. It localises to the cytoskeleton. Part of the dynactin complex that activates the molecular motor dynein for ultra-processive transport along microtubules. This chain is Actin-related protein 10 (ACTR10), found in Sus scrofa (Pig).